Here is a 156-residue protein sequence, read N- to C-terminus: Small ribosomal subunit protein uS7 (156 aa).

It belongs to the universal ribosomal protein uS7 family. Part of the 30S ribosomal subunit. Contacts proteins S9 and S11.

One of the primary rRNA binding proteins, it binds directly to 16S rRNA where it nucleates assembly of the head domain of the 30S subunit. Is located at the subunit interface close to the decoding center, probably blocks exit of the E-site tRNA. The chain is Small ribosomal subunit protein uS7 from Shewanella halifaxensis (strain HAW-EB4).